Here is a 122-residue protein sequence, read N- to C-terminus: Large ribosomal subunit protein uL14 (122 aa).

Belongs to the universal ribosomal protein uL14 family. In terms of assembly, part of the 50S ribosomal subunit. Forms a cluster with proteins L3 and L19. In the 70S ribosome, L14 and L19 interact and together make contacts with the 16S rRNA in bridges B5 and B8.

In terms of biological role, binds to 23S rRNA. Forms part of two intersubunit bridges in the 70S ribosome. This is Large ribosomal subunit protein uL14 from Lacticaseibacillus casei (strain BL23) (Lactobacillus casei).